A 192-amino-acid chain; its full sequence is Outer-membrane lipoprotein LolB (192 aa).

Positions 1–17 (MTYRTLCILAFTALISA) are cleaved as a signal peptide. The N-palmitoyl cysteine moiety is linked to residue Cys18. Residue Cys18 is the site of S-diacylglycerol cysteine attachment.

Belongs to the LolB family. In terms of assembly, monomer.

Its subcellular location is the cell outer membrane. Its function is as follows. Plays a critical role in the incorporation of lipoproteins in the outer membrane after they are released by the LolA protein. This is Outer-membrane lipoprotein LolB from Marinomonas sp. (strain MWYL1).